The chain runs to 121 residues: Small ribosomal subunit protein uS13 (121 aa).

A disordered region spans residues 91–121 (HRMSLPVRGQRTRTNARTRRGSRKTVAGRKK). Over residues 100–121 (QRTRTNARTRRGSRKTVAGRKK) the composition is skewed to basic residues.

It belongs to the universal ribosomal protein uS13 family. As to quaternary structure, part of the 30S ribosomal subunit. Forms a loose heterodimer with protein S19. Forms two bridges to the 50S subunit in the 70S ribosome.

Functionally, located at the top of the head of the 30S subunit, it contacts several helices of the 16S rRNA. In the 70S ribosome it contacts the 23S rRNA (bridge B1a) and protein L5 of the 50S subunit (bridge B1b), connecting the 2 subunits; these bridges are implicated in subunit movement. Contacts the tRNAs in the A and P-sites. This chain is Small ribosomal subunit protein uS13, found in Prochlorococcus marinus (strain MIT 9211).